Here is a 131-residue protein sequence, read N- to C-terminus: Anaerobic and virulence modulator AnvM (131 aa).

Its function is as follows. Plays an essential role by modulating the expression of hundreds of genes including quorum sensing system genes and oxidative stress resistance genes under both aerobic and anaerobic conditions. This chain is Anaerobic and virulence modulator AnvM, found in Pseudomonas aeruginosa (strain ATCC 15692 / DSM 22644 / CIP 104116 / JCM 14847 / LMG 12228 / 1C / PRS 101 / PAO1).